The following is a 600-amino-acid chain: ATP-dependent zinc metalloprotease FtsH 1 (600 aa).

Over 1–8 (MKTHYFKK) the chain is Cytoplasmic. Residues 9 to 29 (IFNLKFLVIFFSILFCILLIL) traverse the membrane as a helical segment. The Extracellular segment spans residues 30–130 (DLTFERRIKG…PKTDFHLSEL (101 aa)). Residues 131-151 (ILSLVPIVSSTIFMFYIISNI) traverse the membrane as a helical segment. Residues 152–600 (KKSSGKLNSN…IEQLVVNTKK (449 aa)) lie on the Cytoplasmic side of the membrane. 215 to 222 (GPPGTGKT) contacts ATP. His437 lines the Zn(2+) pocket. Glu438 is a catalytic residue. Positions 441 and 513 each coordinate Zn(2+).

In the central section; belongs to the AAA ATPase family. It in the C-terminal section; belongs to the peptidase M41 family. Homohexamer. It depends on Zn(2+) as a cofactor.

The protein resides in the cell membrane. Its function is as follows. Acts as a processive, ATP-dependent zinc metallopeptidase for both cytoplasmic and membrane proteins. Plays a role in the quality control of integral membrane proteins. The protein is ATP-dependent zinc metalloprotease FtsH 1 of Phytoplasma mali (strain AT).